Reading from the N-terminus, the 166-residue chain is Small ribosomal subunit protein uS5 (166 aa).

In terms of domain architecture, S5 DRBM spans Tyr12–Val75.

This sequence belongs to the universal ribosomal protein uS5 family. As to quaternary structure, part of the 30S ribosomal subunit. Contacts proteins S4 and S8.

Functionally, with S4 and S12 plays an important role in translational accuracy. In terms of biological role, located at the back of the 30S subunit body where it stabilizes the conformation of the head with respect to the body. This chain is Small ribosomal subunit protein uS5, found in Pseudomonas syringae pv. tomato (strain ATCC BAA-871 / DC3000).